A 213-amino-acid polypeptide reads, in one-letter code: N-(5'-phosphoribosyl)anthranilate isomerase (213 aa).

It belongs to the TrpF family.

It catalyses the reaction N-(5-phospho-beta-D-ribosyl)anthranilate = 1-(2-carboxyphenylamino)-1-deoxy-D-ribulose 5-phosphate. The protein operates within amino-acid biosynthesis; L-tryptophan biosynthesis; L-tryptophan from chorismate: step 3/5. The protein is N-(5'-phosphoribosyl)anthranilate isomerase of Roseiflexus sp. (strain RS-1).